The primary structure comprises 211 residues: Cyclin-dependent kinase inhibitor 3 (211 aa).

Residues 1-20 (MKPPISIQASEFDSSDEEPV) are disordered. The interaction with CDK2 stretch occupies residues 1–34 (MKPPISIQASEFDSSDEEPVDEEQTPIQISWLPL). In terms of domain architecture, Tyrosine-protein phosphatase spans 32–200 (LPLSRVNCSQ…FRDKLAAYLS (169 aa)). The active-site Phosphocysteine intermediate is C140.

Belongs to the protein-tyrosine phosphatase family. In terms of assembly, interacts with cyclin-dependent kinases such as CDK1, CDK2 and CDK3. Does not interact with CDK4. Interacts (via C-terminus) with phosphorylated CDK2 (via C-terminal helix). Interacts with MS4A3 (via C-terminus); the interaction enhances CDKN3 enzymatic activity.

It localises to the cytoplasm. Its subcellular location is the perinuclear region. It catalyses the reaction O-phospho-L-tyrosyl-[protein] + H2O = L-tyrosyl-[protein] + phosphate. The catalysed reaction is O-phospho-L-seryl-[protein] + H2O = L-seryl-[protein] + phosphate. The enzyme catalyses O-phospho-L-threonyl-[protein] + H2O = L-threonyl-[protein] + phosphate. Functionally, may play a role in cell cycle regulation. Dual specificity phosphatase active toward substrates containing either phosphotyrosine or phosphoserine residues. Dephosphorylates CDK2 at 'Thr-160' in a cyclin-dependent manner. The chain is Cyclin-dependent kinase inhibitor 3 from Mus musculus (Mouse).